The following is a 1090-amino-acid chain: Aminopeptidase-like protein AC3.5 (1090 aa).

At 1-77 (MEDVDLGKDR…KPKKRIACSP (77 aa)) the chain is on the cytoplasmic side. The segment covering 21 to 33 (GNGSASNLNNRNN) has biased composition (low complexity). The interval 21 to 71 (GNGSASNLNNRNNIPLSEKAAKEPLQTQPQEAPPAPKPKVQKQKPPVKPKK) is disordered. Over residues 59 to 71 (KVQKQKPPVKPKK) the composition is skewed to basic residues. Residues 78–98 (GSAICLFLLAVAAIIFAAFLG) traverse the membrane as a helical; Signal-anchor for type II membrane protein segment. Residues 99–1090 (HYLTKQNYEM…DEMESSEEQE (992 aa)) are Lumenal-facing. N-linked (GlcNAc...) asparagine glycans are attached at residues Asn115, Asn123, Asn143, Asn176, and Asn230. Positions 217–259 (VTKRAKKSVDSGTNSTSEMPEGSGEEAMATTATTTTTESTTPV) are disordered. Residues 241 to 257 (EEAMATTATTTTTESTT) show a composition bias toward low complexity. N-linked (GlcNAc...) asparagine glycosylation is found at Asn402, Asn710, Asn723, Asn789, Asn894, Asn919, Asn964, and Asn993. The segment covering 1069-1080 (YLDGKMKGPAKD) has biased composition (basic and acidic residues). Residues 1069 to 1090 (YLDGKMKGPAKDDEMESSEEQE) form a disordered region. The span at 1081–1090 (DEMESSEEQE) shows a compositional bias: acidic residues.

The protein belongs to the peptidase M1 family.

It localises to the membrane. The sequence is that of Aminopeptidase-like protein AC3.5 from Caenorhabditis elegans.